Consider the following 511-residue polypeptide: Exodeoxyribonuclease 7 large subunit (511 aa).

Belongs to the XseA family. Heterooligomer composed of large and small subunits.

It localises to the cytoplasm. The enzyme catalyses Exonucleolytic cleavage in either 5'- to 3'- or 3'- to 5'-direction to yield nucleoside 5'-phosphates.. Its function is as follows. Bidirectionally degrades single-stranded DNA into large acid-insoluble oligonucleotides, which are then degraded further into small acid-soluble oligonucleotides. The sequence is that of Exodeoxyribonuclease 7 large subunit from Brucella melitensis biotype 2 (strain ATCC 23457).